Here is a 247-residue protein sequence, read N- to C-terminus: Adenosylcobinamide-GDP ribazoletransferase (247 aa).

5 helical membrane passes run 34-54 (IVMFPFIGLILGGVSGLIFIL), 59-79 (CGIPLAALFCILALALLTGGF), 113-133 (GGLALIFVLLTKILVVSELAL), 138-158 (MLAALAAACAAGRGSAVLLMY), and 187-207 (LAVIVATVLLPGMQGLAAMVV).

The protein belongs to the CobS family. It depends on Mg(2+) as a cofactor.

It is found in the cell inner membrane. The catalysed reaction is alpha-ribazole + adenosylcob(III)inamide-GDP = adenosylcob(III)alamin + GMP + H(+). It catalyses the reaction alpha-ribazole 5'-phosphate + adenosylcob(III)inamide-GDP = adenosylcob(III)alamin 5'-phosphate + GMP + H(+). It functions in the pathway cofactor biosynthesis; adenosylcobalamin biosynthesis; adenosylcobalamin from cob(II)yrinate a,c-diamide: step 7/7. Its function is as follows. Joins adenosylcobinamide-GDP and alpha-ribazole to generate adenosylcobalamin (Ado-cobalamin). Also synthesizes adenosylcobalamin 5'-phosphate from adenosylcobinamide-GDP and alpha-ribazole 5'-phosphate. The protein is Adenosylcobinamide-GDP ribazoletransferase of Salmonella choleraesuis (strain SC-B67).